The following is a 232-amino-acid chain: Octanoyltransferase (232 aa).

Residues 32–219 (DTIYDTLILL…SFMVFNFSSC (188 aa)) enclose the BPL/LPL catalytic domain. Substrate contacts are provided by residues 77–84 (RGGDITYH), 140–142 (AIG), and 153–155 (GFA). Cys-171 functions as the Acyl-thioester intermediate in the catalytic mechanism.

Belongs to the LipB family.

The protein resides in the cytoplasm. The catalysed reaction is octanoyl-[ACP] + L-lysyl-[protein] = N(6)-octanoyl-L-lysyl-[protein] + holo-[ACP] + H(+). Its pathway is protein modification; protein lipoylation via endogenous pathway; protein N(6)-(lipoyl)lysine from octanoyl-[acyl-carrier-protein]: step 1/2. Its function is as follows. Catalyzes the transfer of endogenously produced octanoic acid from octanoyl-acyl-carrier-protein onto the lipoyl domains of lipoate-dependent enzymes. Lipoyl-ACP can also act as a substrate although octanoyl-ACP is likely to be the physiological substrate. The protein is Octanoyltransferase of Dictyoglomus thermophilum (strain ATCC 35947 / DSM 3960 / H-6-12).